The chain runs to 323 residues: Putative ABC transporter substrate-binding lipoprotein YhfQ (323 aa).

The N-terminal stretch at 1–19 is a signal peptide; it reads MKKTLIILTVLLLSVLTAA. A lipid anchor (N-palmitoyl cysteine) is attached at Cys20. Cys20 carries the S-diacylglycerol cysteine lipid modification. Positions 51–322 constitute a Fe/B12 periplasmic-binding domain; it reads RVVVLELGFI…ELQKEMPAAK (272 aa).

This sequence belongs to the bacterial solute-binding protein 8 family. In terms of assembly, interacts with FloT.

The protein resides in the cell membrane. The protein localises to the membrane raft. The chain is Putative ABC transporter substrate-binding lipoprotein YhfQ (yhfQ) from Bacillus subtilis (strain 168).